The sequence spans 148 residues: Single-stranded DNA-binding protein 2 (148 aa).

An SSB domain is found at 6 to 108; the sequence is MNHITVSGLV…IEAESFGHDL (103 aa).

In terms of assembly, homotetramer.

The protein is Single-stranded DNA-binding protein 2 (ssb2) of Tropheryma whipplei (strain TW08/27) (Whipple's bacillus).